A 666-amino-acid chain; its full sequence is L-aspartate N-monooxygenase (nitrosuccinate-forming) (666 aa).

The disordered stretch occupies residues 645 to 666 (LPAYEDPGVRCPSDDRLTEVTA). Basic and acidic residues predominate over residues 656 to 666 (PSDDRLTEVTA).

This sequence belongs to the nitrosuccinic acid synthase family. It depends on FAD as a cofactor.

The catalysed reaction is L-aspartate + 3 NADPH + 3 O2 + 2 H(+) = 2-nitrobutanedioate + 3 NADP(+) + 4 H2O. Its pathway is antibiotic biosynthesis. Functionally, part of a gene cluster involved in the biosynthesis of cremeomycin, a light-sensitive o-diazoquinone with antibacterial and antiproliferative effects. Catalyzes the iterative oxidation of L-aspartic acid to nitrosuccinic acid (2-nitrobutanedioate) via N-hydroxyaspartic acid and nitrososuccinic acid. In Streptomyces cremeus, this protein is L-aspartate N-monooxygenase (nitrosuccinate-forming).